The following is a 425-amino-acid chain: Histidine--tRNA ligase (425 aa).

This sequence belongs to the class-II aminoacyl-tRNA synthetase family. Homodimer.

The protein resides in the cytoplasm. The enzyme catalyses tRNA(His) + L-histidine + ATP = L-histidyl-tRNA(His) + AMP + diphosphate + H(+). The chain is Histidine--tRNA ligase from Erwinia tasmaniensis (strain DSM 17950 / CFBP 7177 / CIP 109463 / NCPPB 4357 / Et1/99).